The primary structure comprises 296 residues: N-acetylmuramic acid 6-phosphate etherase (296 aa).

The 164-residue stretch at 54-217 folds into the SIS domain; that stretch reads VISCFQKGGR…STASMVGIGK (164 aa). Catalysis depends on glutamate 82, which acts as the Proton donor. Glutamate 113 is a catalytic residue.

Belongs to the GCKR-like family. MurNAc-6-P etherase subfamily. As to quaternary structure, homodimer.

It carries out the reaction N-acetyl-D-muramate 6-phosphate + H2O = N-acetyl-D-glucosamine 6-phosphate + (R)-lactate. Its pathway is amino-sugar metabolism; N-acetylmuramate degradation. In terms of biological role, specifically catalyzes the cleavage of the D-lactyl ether substituent of MurNAc 6-phosphate, producing GlcNAc 6-phosphate and D-lactate. The sequence is that of N-acetylmuramic acid 6-phosphate etherase from Listeria monocytogenes serotype 4b (strain CLIP80459).